The primary structure comprises 457 residues: Elongation factor 1-alpha (457 aa).

G2 bears the N,N,N-trimethylglycine mark. K3 bears the N6,N6-dimethyllysine; alternate mark. At K3 the chain carries N6-methyllysine; alternate. Residues 5–240 (KTHVNVVVIG…DAIEPPVRPS (236 aa)) enclose the tr-type G domain. Residues 14 to 21 (GHVDSGKS) form a G1 region. 14-21 (GHVDSGKS) lines the GTP pocket. Residue K30 is modified to N6-methyllysine. A G2 region spans residues 70 to 74 (GITID). K79 is subject to N6,N6,N6-trimethyllysine. The G3 stretch occupies residues 91-94 (DAPG). Residues 91–95 (DAPGH) and 153–156 (NKMD) each bind GTP. Residues 153–156 (NKMD) form a G4 region. Residues 192 to 194 (SGW) are G5. At K316 the chain carries N6,N6-dimethyllysine; alternate. K316 carries the post-translational modification N6-methyllysine; alternate. K389 is subject to N6-methyllysine.

Belongs to the TRAFAC class translation factor GTPase superfamily. Classic translation factor GTPase family. EF-Tu/EF-1A subfamily.

The protein resides in the cytoplasm. This protein promotes the GTP-dependent binding of aminoacyl-tRNA to the A-site of ribosomes during protein biosynthesis. The chain is Elongation factor 1-alpha (TEF-3) from Mucor circinelloides f. lusitanicus (Mucor racemosus var. lusitanicus).